The following is a 64-amino-acid chain: Large ribosomal subunit protein bL35 (64 aa).

A disordered region spans residues 1–31 (MPKMKTHSGAKKRFKLTGTGKLKRQQANRRH).

This sequence belongs to the bacterial ribosomal protein bL35 family.

This is Large ribosomal subunit protein bL35 from Paenarthrobacter aurescens (strain TC1).